Reading from the N-terminus, the 426-residue chain is 4-hydroxy-3-methylbut-2-en-1-yl diphosphate synthase (flavodoxin) (426 aa).

A disordered region spans residues 1–20 (MLDRDLTLSDDAYESSPVSR). Residues Cys-320, Cys-323, Cys-366, and Glu-373 each coordinate [4Fe-4S] cluster.

The protein belongs to the IspG family. Requires [4Fe-4S] cluster as cofactor.

The enzyme catalyses (2E)-4-hydroxy-3-methylbut-2-enyl diphosphate + oxidized [flavodoxin] + H2O + 2 H(+) = 2-C-methyl-D-erythritol 2,4-cyclic diphosphate + reduced [flavodoxin]. It participates in isoprenoid biosynthesis; isopentenyl diphosphate biosynthesis via DXP pathway; isopentenyl diphosphate from 1-deoxy-D-xylulose 5-phosphate: step 5/6. In terms of biological role, converts 2C-methyl-D-erythritol 2,4-cyclodiphosphate (ME-2,4cPP) into 1-hydroxy-2-methyl-2-(E)-butenyl 4-diphosphate. The sequence is that of 4-hydroxy-3-methylbut-2-en-1-yl diphosphate synthase (flavodoxin) from Wolbachia pipientis subsp. Culex pipiens (strain wPip).